Reading from the N-terminus, the 218-residue chain is Large ribosomal subunit protein uL16 (218 aa).

It belongs to the universal ribosomal protein uL16 family. As to quaternary structure, component of the large ribosomal subunit. Mature ribosomes consist of a small (40S) and a large (60S) subunit. The 40S subunit contains about 33 different proteins and 1 molecule of RNA (18S). The 60S subunit contains about 49 different proteins and 3 molecules of RNA (28S, 5.8S and 5S).

The protein is Large ribosomal subunit protein uL16 (RpL10) of Drosophila melanogaster (Fruit fly).